The primary structure comprises 307 residues: UDP-N-acetylenolpyruvoylglucosamine reductase (307 aa).

An FAD-binding PCMH-type domain is found at 27 to 193 (RVGGPADVVF…LDAVFEGLAD (167 aa)). The active site involves arginine 172. Serine 222 serves as the catalytic Proton donor. Glutamate 299 is an active-site residue.

The protein belongs to the MurB family. FAD is required as a cofactor.

The protein resides in the cytoplasm. The catalysed reaction is UDP-N-acetyl-alpha-D-muramate + NADP(+) = UDP-N-acetyl-3-O-(1-carboxyvinyl)-alpha-D-glucosamine + NADPH + H(+). It participates in cell wall biogenesis; peptidoglycan biosynthesis. Cell wall formation. The sequence is that of UDP-N-acetylenolpyruvoylglucosamine reductase from Caulobacter sp. (strain K31).